The following is a 974-amino-acid chain: UvrABC system protein A (974 aa).

34 to 41 (GLSGSGKS) is a binding site for ATP. ABC transporter domains lie at 331 to 610 (WARS…TNSL) and 630 to 959 (ISKT…QFLK). 663–670 (GVSGGGKS) is an ATP binding site. The C4-type zinc finger occupies 762–788 (CEACQGDGVIKIEMHFLPDVYVTCDVC).

Belongs to the ABC transporter superfamily. UvrA family. As to quaternary structure, forms a heterotetramer with UvrB during the search for lesions.

The protein resides in the cytoplasm. The UvrABC repair system catalyzes the recognition and processing of DNA lesions. UvrA is an ATPase and a DNA-binding protein. A damage recognition complex composed of 2 UvrA and 2 UvrB subunits scans DNA for abnormalities. When the presence of a lesion has been verified by UvrB, the UvrA molecules dissociate. The chain is UvrABC system protein A from Brucella abortus (strain 2308).